A 276-amino-acid chain; its full sequence is Light-independent protochlorophyllide reductase iron-sulfur ATP-binding protein (276 aa).

ATP-binding positions include 12–17 and Lys41; that span reads GIGKST. Ser16 serves as a coordination point for Mg(2+). 2 residues coordinate [4Fe-4S] cluster: Cys97 and Cys131. 182–183 serves as a coordination point for ATP; that stretch reads NR.

The protein belongs to the NifH/BchL/ChlL family. Homodimer. Protochlorophyllide reductase is composed of three subunits; BchL, BchN and BchB. It depends on [4Fe-4S] cluster as a cofactor.

The enzyme catalyses chlorophyllide a + oxidized 2[4Fe-4S]-[ferredoxin] + 2 ADP + 2 phosphate = protochlorophyllide a + reduced 2[4Fe-4S]-[ferredoxin] + 2 ATP + 2 H2O. It functions in the pathway porphyrin-containing compound metabolism; bacteriochlorophyll biosynthesis (light-independent). Its function is as follows. Component of the dark-operative protochlorophyllide reductase (DPOR) that uses Mg-ATP and reduced ferredoxin to reduce ring D of protochlorophyllide (Pchlide) to form chlorophyllide a (Chlide). This reaction is light-independent. The L component serves as a unique electron donor to the NB-component of the complex, and binds Mg-ATP. In Chlorobaculum tepidum (strain ATCC 49652 / DSM 12025 / NBRC 103806 / TLS) (Chlorobium tepidum), this protein is Light-independent protochlorophyllide reductase iron-sulfur ATP-binding protein.